The primary structure comprises 626 residues: Probable metalloendopeptidase G1-type (626 aa).

H42 contacts Zn(2+). E45 is a catalytic residue. H46 serves as a coordination point for Zn(2+).

This sequence belongs to the peptidase M44 family. Requires Zn(2+) as cofactor.

Its function is as follows. Seems to be involved in viral proteins maturation by cleavage at Ala-Gly-|-Xaa motifs. This chain is Probable metalloendopeptidase G1-type, found in Fowlpox virus (strain NVSL) (FPV).